The primary structure comprises 334 residues: ADP-L-glycero-D-manno-heptose-6-epimerase (334 aa).

Residues 11–12 (FI), 32–33 (DN), K39, K54, 77–81 (QGACS), and N94 contribute to the NADP(+) site. Y141 functions as the Proton acceptor in the catalytic mechanism. Residue K145 participates in NADP(+) binding. Position 171 (N171) interacts with substrate. Residues V172 and K180 each contribute to the NADP(+) site. Catalysis depends on K180, which acts as the Proton acceptor. Substrate-binding positions include R182, H189, 203-206 (FGSN), R216, and Y295.

Belongs to the NAD(P)-dependent epimerase/dehydratase family. HldD subfamily. Homopentamer. NADP(+) is required as a cofactor.

It catalyses the reaction ADP-D-glycero-beta-D-manno-heptose = ADP-L-glycero-beta-D-manno-heptose. The protein operates within nucleotide-sugar biosynthesis; ADP-L-glycero-beta-D-manno-heptose biosynthesis; ADP-L-glycero-beta-D-manno-heptose from D-glycero-beta-D-manno-heptose 7-phosphate: step 4/4. Its pathway is bacterial outer membrane biogenesis; LOS core biosynthesis. Functionally, catalyzes the interconversion between ADP-D-glycero-beta-D-manno-heptose and ADP-L-glycero-beta-D-manno-heptose via an epimerization at carbon 6 of the heptose. The chain is ADP-L-glycero-D-manno-heptose-6-epimerase from Neisseria gonorrhoeae.